We begin with the raw amino-acid sequence, 265 residues long: Large ribosomal subunit protein eL8 (265 aa).

Belongs to the eukaryotic ribosomal protein eL8 family. In terms of assembly, interacts with cmd-1 in the presence of Ca(2+).

The sequence is that of Large ribosomal subunit protein eL8 from Caenorhabditis elegans.